The primary structure comprises 377 residues: Tyrosine-protein phosphatase 2 (377 aa).

The region spanning 27–347 (IDKEFNFILQ…RFCYLAISEA (321 aa)) is the Tyrosine-protein phosphatase domain. The disordered stretch occupies residues 77–137 (IDDDDDDEDD…EDHGGSGDEG (61 aa)). Acidic residues predominate over residues 78–91 (DDDDDDEDDNEDDI). Residues 92–102 (IVSNNNNNNNN) are compositionally biased toward low complexity. Residues 113–123 (GSSGQSDVMSN) show a composition bias toward polar residues. Catalysis depends on Cys-281, which acts as the Phosphocysteine intermediate.

It belongs to the protein-tyrosine phosphatase family. Non-receptor class subfamily.

It catalyses the reaction O-phospho-L-tyrosyl-[protein] + H2O = L-tyrosyl-[protein] + phosphate. This is Tyrosine-protein phosphatase 2 (ptpB) from Dictyostelium discoideum (Social amoeba).